A 357-amino-acid polypeptide reads, in one-letter code: MNTLFMHCRPGFEGEVCSEISDLAARLNVAGYAKAKPATACAEFVCTEEDGAERLMRGQRFAELIFPRQWARGFFIDLPENDRISVILAHMSEFPVCGSLWLEVVDTNDGKELSNFCKKFEGPLRKALTGAGKLVEDTSKPRLLLTFKSGREVFLGLADAGNSAMWPMGIPRLKFPREAPSRSTLKLEEAWHHFIPRDQWEDRLHSDMTGVDLGAAPGGWTWQLVNRGMLVTAIDNGPMAESLMDTGLVQHLMADGFTFKPKQPVDWMVCDIVEKPARNAAMLEEWIGEGHCREAVVNLKLPMKQRYAEVKRLLERIADGFKARGIKVDIGCKQLYHDREEVTCHLRRLDVKKAKAR.

S-adenosyl-L-methionine contacts are provided by residues serine 183, alanine 216–glycine 219, aspartate 235, aspartate 255, and aspartate 271. Catalysis depends on lysine 300, which acts as the Proton acceptor.

Belongs to the class I-like SAM-binding methyltransferase superfamily. RNA methyltransferase RlmE family. RlmM subfamily. Monomer.

The protein resides in the cytoplasm. The catalysed reaction is cytidine(2498) in 23S rRNA + S-adenosyl-L-methionine = 2'-O-methylcytidine(2498) in 23S rRNA + S-adenosyl-L-homocysteine + H(+). Functionally, catalyzes the 2'-O-methylation at nucleotide C2498 in 23S rRNA. In Pseudomonas fluorescens (strain Pf0-1), this protein is Ribosomal RNA large subunit methyltransferase M.